The following is a 267-amino-acid chain: LexA repressor (267 aa).

The disordered stretch occupies residues 1-44 (MSIDESSDNPTPRPKLGRPPKSEADKRAEKEAQKDGKKPALSTR). Over residues 20 to 38 (PKSEADKRAEKEAQKDGKK) the composition is skewed to basic and acidic residues. A DNA-binding region (H-T-H motif) is located at residues 65–85 (IREIADAVGLHSTSSVSYHLT). Residues 111–140 (GQLTNESTKKNAGSPQPTSAAIPEPTTEGE) are disordered. Positions 112–129 (QLTNESTKKNAGSPQPTS) are enriched in polar residues. Catalysis depends on for autocatalytic cleavage activity residues Ser191 and Lys228.

The protein belongs to the peptidase S24 family. Homodimer.

It catalyses the reaction Hydrolysis of Ala-|-Gly bond in repressor LexA.. Functionally, represses a number of genes involved in the response to DNA damage (SOS response), including recA and lexA. In the presence of single-stranded DNA, RecA interacts with LexA causing an autocatalytic cleavage which disrupts the DNA-binding part of LexA, leading to derepression of the SOS regulon and eventually DNA repair. The polypeptide is LexA repressor (Corynebacterium jeikeium (strain K411)).